The primary structure comprises 112 residues: Protein NIM1-INTERACTING 3 (112 aa).

Disordered regions lie at residues 1-20 (MDRDRKRVKMEKEDDEEEKM) and 77-112 (EKAANESSSASNEYDGSKEKQEGSETNVCLDLNLSL). 2 coiled-coil regions span residues 1-35 (MDRDRKRVKMEKEDDEEEKMEKLYTVLKNAREMRK) and 69-96 (NKAEANNIEKAANESSSASNEYDGSKEK). Low complexity predominate over residues 77–89 (EKAANESSSASNE).

This sequence belongs to the NPR1-interactor family. As to quaternary structure, interacts with NPR1 C-terminal region.

The protein resides in the nucleus. This is Protein NIM1-INTERACTING 3 from Arabidopsis thaliana (Mouse-ear cress).